We begin with the raw amino-acid sequence, 156 residues long: Small ribosomal subunit protein uS7 (156 aa).

The protein belongs to the universal ribosomal protein uS7 family. In terms of assembly, part of the 30S ribosomal subunit. Contacts proteins S9 and S11.

One of the primary rRNA binding proteins, it binds directly to 16S rRNA where it nucleates assembly of the head domain of the 30S subunit. Is located at the subunit interface close to the decoding center, probably blocks exit of the E-site tRNA. The polypeptide is Small ribosomal subunit protein uS7 (Onion yellows phytoplasma (strain OY-M)).